Here is a 1237-residue protein sequence, read N- to C-terminus: Phosphorylase b kinase regulatory subunit alpha, skeletal muscle isoform (1237 aa).

A phosphoserine mark is found at Ser629, Ser729, Ser735, and Ser758. Residues 810 to 840 are calmodulin-binding; sequence LTELYGKVGKIRHWGLIRYISGILRKKVEAL. Ser972 carries the phosphoserine; by autocatalysis modification. Residue Ser981 is modified to Phosphoserine. Phosphoserine; by autocatalysis is present on residues Ser985 and Ser1007. Ser1018 bears the Phosphoserine; by PKA mark. Residues Ser1020, Ser1023, and Ser1030 each carry the phosphoserine modification. Residues 1021 to 1069 are disordered; that stretch reads TESQPNGGHSLGADLMSPSFLSPGTSVTPSSGSFPGHHTSKDSRQGQWQ. Residues 1042 to 1056 show a composition bias toward low complexity; that stretch reads SPGTSVTPSSGSFPG. The calmodulin-binding stretch occupies residues 1060-1100; it reads SKDSRQGQWQRRRRLDGALNRVPIGFYQKVWKVLQKCHGLS. Ser1127 bears the Phosphoserine mark. Cys1234 carries the S-farnesyl cysteine lipid modification.

This sequence belongs to the phosphorylase b kinase regulatory chain family. In terms of assembly, hexadecamer of 4 heterotetramers, each composed of alpha, beta, gamma, and delta subunits. Alpha (PHKA1 or PHKA2) and beta (PHKB) are regulatory subunits, gamma (PHKG1 or PHKG2) is the catalytic subunit, and delta is calmodulin. Post-translationally, phosphorylation of Ser-1018 by PKA stimulates the dephosphorylation of the beta subunit and, thus, reverses the initial stimulation of PHK by the faster beta-subunit phosphorylation by PKA, that occurs in muscle in response to adrenaline. Cys-1234 is farnesylated, but the C-terminal tripeptide is not removed and the cysteine carboxyl is not methylated. In terms of tissue distribution, isoform 1 predominates in muscle, heart, brain and testis. Isoforms 1 and 2 are expressed in similar quantities in the other tissues. Isoform 3 is highly expressed in slow muscle and heart.

It localises to the cell membrane. It functions in the pathway glycan biosynthesis; glycogen metabolism. With respect to regulation, by phosphorylation of various serine residues and by calcium. In terms of biological role, phosphorylase b kinase catalyzes the phosphorylation of serine in certain substrates, including troponin I. The alpha chain may bind calmodulin. This is Phosphorylase b kinase regulatory subunit alpha, skeletal muscle isoform (PHKA1) from Oryctolagus cuniculus (Rabbit).